A 1282-amino-acid polypeptide reads, in one-letter code: ATP-dependent helicase/nuclease subunit A (1282 aa).

The 472-residue stretch at 10–481 folds into the UvrD-like helicase ATP-binding domain; the sequence is SKWTDSQRQV…IELQENFRSS (472 aa). Residue 31 to 38 coordinates ATP; it reads AGAGAGKT. The UvrD-like helicase C-terminal domain occupies 516-820; sequence KPRELYLNED…RLMSIHKSKG (305 aa).

The protein belongs to the helicase family. AddA subfamily. Heterodimer of AddA and AddB/RexB. Mg(2+) serves as cofactor.

It carries out the reaction Couples ATP hydrolysis with the unwinding of duplex DNA by translocating in the 3'-5' direction.. The enzyme catalyses ATP + H2O = ADP + phosphate + H(+). In terms of biological role, the heterodimer acts as both an ATP-dependent DNA helicase and an ATP-dependent, dual-direction single-stranded exonuclease. Recognizes the chi site generating a DNA molecule suitable for the initiation of homologous recombination. The AddA nuclease domain is required for chi fragment generation; this subunit has the helicase and 3' -&gt; 5' nuclease activities. The sequence is that of ATP-dependent helicase/nuclease subunit A from Natranaerobius thermophilus (strain ATCC BAA-1301 / DSM 18059 / JW/NM-WN-LF).